The sequence spans 211 residues: Ribosomal RNA small subunit methyltransferase G (211 aa).

S-adenosyl-L-methionine-binding positions include Gly79, Leu84, 130–131 (VE), and Arg145.

The protein belongs to the methyltransferase superfamily. RNA methyltransferase RsmG family.

The protein resides in the cytoplasm. The catalysed reaction is guanosine(527) in 16S rRNA + S-adenosyl-L-methionine = N(7)-methylguanosine(527) in 16S rRNA + S-adenosyl-L-homocysteine. Functionally, specifically methylates the N7 position of guanine in position 527 of 16S rRNA. This is Ribosomal RNA small subunit methyltransferase G from Alteromonas mediterranea (strain DSM 17117 / CIP 110805 / LMG 28347 / Deep ecotype).